The chain runs to 545 residues: 4-coumarate--CoA ligase 2 (545 aa).

ATP contacts are provided by S192, S193, G194, T195, T196, and K200. (E)-4-coumaroyl-AMP is bound by residues Y242 and S246. CoA is bound at residue K263. Residues 265–334 (DIAQFLELIP…AKFPNAKLGQ (70 aa)) form an SBD1 region. The (E)-4-coumaroyl-AMP site is built by A312, Q334, G335, T339, and M347. The ATP site is built by Q334, G335, and T339. The tract at residues 335 to 402 (GYGMTEAGPV…IRGDQIMKGY (68 aa)) is SBD2. ATP contacts are provided by D423 and R438. Positions 440 and 444 each coordinate (E)-4-coumaroyl-AMP. The CoA site is built by K446 and G447. Residue K529 coordinates ATP.

It belongs to the ATP-dependent AMP-binding enzyme family. Mg(2+) is required as a cofactor.

The enzyme catalyses (E)-4-coumarate + ATP + CoA = (E)-4-coumaroyl-CoA + AMP + diphosphate. It carries out the reaction (E)-4-coumarate + ATP + H(+) = (E)-4-coumaroyl-AMP + diphosphate. It catalyses the reaction (E)-4-coumaroyl-AMP + CoA = (E)-4-coumaroyl-CoA + AMP + H(+). The protein operates within phytoalexin biosynthesis; 3,4',5-trihydroxystilbene biosynthesis; 3,4',5-trihydroxystilbene from trans-4-coumarate: step 1/2. Functionally, carboxylate--CoA ligase that may use 4-coumarate as substrate. Follows a two-step reaction mechanism, wherein the carboxylate substrate first undergoes adenylation by ATP, followed by a thioesterification in the presence of CoA to yield the final CoA thioester. The chain is 4-coumarate--CoA ligase 2 (4CL2) from Solanum tuberosum (Potato).